Consider the following 365-residue polypeptide: P43 5S RNA-binding protein (365 aa).

C2H2-type zinc fingers lie at residues 15–39 (LRCP…MAGH), 45–69 (WKCG…VKRH), 75–100 (LSCP…LYKH), 106–130 (LKCF…LSVH), 136–160 (SVCD…QKRH), 163–187 (YRCS…VKKH), 191–213 (LQCA…KATH), 220–245 (LPCP…RKLH), and 251–275 (HRCP…LVVH).

The 42S RNP particle comprises four subunits each of which contains one molecule of 5S RNA, three molecules of tRNA, two molecules of p50 (EF1-alpha) and one molecule of the 5S RNA binding protein 43.

P43 is a 5S RNA binding protein which is a major constituent of oocytes and comprises part of a 42S ribonucleoprotein storage particle. The chain is P43 5S RNA-binding protein from Xenopus laevis (African clawed frog).